Reading from the N-terminus, the 1161-residue chain is MSKDFVHLHLHTQFSLLDGAIKIDELVKKAKEYGYKAVGMSDHGNLFGSYKFYKALKAEGIKPIIGMEAYFTTGSRFDRKTKTSEDNITDKYNHHLILIAKDDKGLKNLMKLSTLAYKEGFYYKPRIDYELLEKYGEGLIALTACLKGVPTYYASINEVKKAEEWVKKFKDIFGDDLYLELQANNIPEQEVANRNLIEIAKKYDVKLIATQDAHYLNPEDRYAHTVLMALQMKKTIHELSSGNFKCSNEDLHFAPPEYMWKKFEGKFEGWEKALLNTLEVMEKTADSFEIFENSTYLLPKYDVPPDKTLEEYLRELAYKGLRQRIERGQAKDTKEYWERLEYELEVINKMGFAGYFLIVQDFINWAKKNDIPVGPGRGSAGGSLVAYAIGITDVDPIKHGFLFERFLNPERVSMPDIDVDFCQDNREKVIEYVRNKYGHDNVAQIITYNVMKAKQTLRDVARAMGLPYSTADKLAKLIPQGDVQGTWLSLEEMYKTPVEELLQKYGEHRTDIEDNVKKFRQICEESPEIKQLVETALKLEGLTRHTSLHAAGVVIAPKPLSELVPLYYDKEGEVATQYDMVQLEELGLLKMDFLGLKTLTELKLMKELIKERHGVDINFLELPLDDPKVYKLLQEGKTTGVFQLESRGMKELLKKLKPDSFDDIVAVLALYRPGPLKSGLVDTYIKRKHGKEPVEYPFPELEPVLKETYGVIVYQEQVMKMSQILSGFTPGEADTLRKAIGKKKADLMAQMKDKFIQGAVERGYPEEKIRKLWEDIEKFASYSFNKSHSVAYGYISYWTAYVKAHYPAEFFAVKLTTEKNDNKFLNLIKDAKLFGFEILPPDINKSDVGFTIEGENRIRFGLARIKGVGEETAKIIVEARKKYKQFKGLADFINKTKNRKINKKVVEALVKAGAFDFTKKKRKELLAKVANSEKALMATQNSLFGAPKEEVEELDPLKLEKEVLGFYISGHPLDNYEKLLKNRYTPIEDLEEWDKESEAVLTGVITELKVKKTKNGDYMAVFNLVDKTGLIECVVFPGVYEEAKELIEEDRVVVVKGFLDEDLETENVKFVVKEVFSPEEFAKEMRNTLYIFLKREQALNGVAEKLKGIIENNRTEDGYNLVLTVDLGDYFVDLALPQDMKLKADRKVVEEIEKLGVKVII.

It belongs to the DNA polymerase type-C family. DnaE subfamily. DNA polymerase III contains a core (composed of alpha, epsilon and theta chains) that associates with a tau subunit. This core dimerizes to form the PolIII' complex. PolIII' associates with the gamma complex (composed of gamma, delta, delta', psi and chi chains) and with the beta chain to form the complete DNA polymerase III complex.

It localises to the cytoplasm. The catalysed reaction is DNA(n) + a 2'-deoxyribonucleoside 5'-triphosphate = DNA(n+1) + diphosphate. In terms of biological role, DNA polymerase III is a complex, multichain enzyme responsible for most of the replicative synthesis in bacteria. This DNA polymerase also exhibits 3' to 5' exonuclease activity. The alpha chain is the DNA polymerase. In Aquifex aeolicus (strain VF5), this protein is DNA polymerase III subunit alpha (dnaE).